The sequence spans 476 residues: Proline--tRNA ligase (476 aa).

Belongs to the class-II aminoacyl-tRNA synthetase family. ProS type 3 subfamily. As to quaternary structure, homodimer.

The protein localises to the cytoplasm. The enzyme catalyses tRNA(Pro) + L-proline + ATP = L-prolyl-tRNA(Pro) + AMP + diphosphate. Functionally, catalyzes the attachment of proline to tRNA(Pro) in a two-step reaction: proline is first activated by ATP to form Pro-AMP and then transferred to the acceptor end of tRNA(Pro). The polypeptide is Proline--tRNA ligase (Mycoplasma mobile (strain ATCC 43663 / 163K / NCTC 11711) (Mesomycoplasma mobile)).